We begin with the raw amino-acid sequence, 262 residues long: Hydroxyethylthiazole kinase (262 aa).

A substrate-binding site is contributed by methionine 44. ATP is bound by residues arginine 118 and serine 166. Glycine 193 serves as a coordination point for substrate.

The protein belongs to the Thz kinase family. Requires Mg(2+) as cofactor.

It carries out the reaction 5-(2-hydroxyethyl)-4-methylthiazole + ATP = 4-methyl-5-(2-phosphooxyethyl)-thiazole + ADP + H(+). Its pathway is cofactor biosynthesis; thiamine diphosphate biosynthesis; 4-methyl-5-(2-phosphoethyl)-thiazole from 5-(2-hydroxyethyl)-4-methylthiazole: step 1/1. In terms of biological role, catalyzes the phosphorylation of the hydroxyl group of 4-methyl-5-beta-hydroxyethylthiazole (THZ). The protein is Hydroxyethylthiazole kinase of Chlamydia abortus (strain DSM 27085 / S26/3) (Chlamydophila abortus).